Here is a 581-residue protein sequence, read N- to C-terminus: Arginine--tRNA ligase (581 aa).

Positions 126 to 136 (PNLAKEMHVGH) match the 'HIGH' region motif.

This sequence belongs to the class-I aminoacyl-tRNA synthetase family. As to quaternary structure, monomer.

The protein resides in the cytoplasm. The enzyme catalyses tRNA(Arg) + L-arginine + ATP = L-arginyl-tRNA(Arg) + AMP + diphosphate. This chain is Arginine--tRNA ligase, found in Shewanella woodyi (strain ATCC 51908 / MS32).